The sequence spans 336 residues: MQSIPVKNAGDRLVDAYRRTYYYLRLSITDVCNFRCNYCLPDGYHPSHERDKFLTVDEIRRAVSAFAAMGAQKVRITGGEPTLRKDFLQITENITALDGIRHVALTTNGYRMAQDVGAWKQAGISSINVSVDSLDPRMFYQITGENKFTEVMRGIDRAFEAGYRKIKVNSVLMKDLNEREFDKFLAWVKDRPIQMRFIELMQTGEMDAFFRCHHLSGQVLAEKLIRDGWQLQSKGITDGPAKVFRHPDYVGEIGLIMPYEPDFCASCNRLRVSAKGKLHLCLFGEEGIDLRDLLQRDDQQSLLQARLFAALQGKREHHFLHRGDSGIRKNLSTIGG.

Positions 16–241 (AYRRTYYYLR…QSKGITDGPA (226 aa)) constitute a Radical SAM core domain. R25 contacts GTP. Residues C32 and C36 each coordinate [4Fe-4S] cluster. Y38 contacts S-adenosyl-L-methionine. [4Fe-4S] cluster is bound at residue C39. R75 provides a ligand contact to GTP. Position 79 (G79) interacts with S-adenosyl-L-methionine. GTP is bound at residue T106. S130 is an S-adenosyl-L-methionine binding site. K167 serves as a coordination point for GTP. An S-adenosyl-L-methionine-binding site is contributed by M201. Residues C264 and C267 each coordinate [4Fe-4S] cluster. GTP is bound at residue 269–271 (RLR). Residue C281 participates in [4Fe-4S] cluster binding.

This sequence belongs to the radical SAM superfamily. MoaA family. As to quaternary structure, monomer and homodimer. The cofactor is [4Fe-4S] cluster.

It catalyses the reaction GTP + AH2 + S-adenosyl-L-methionine = (8S)-3',8-cyclo-7,8-dihydroguanosine 5'-triphosphate + 5'-deoxyadenosine + L-methionine + A + H(+). Its pathway is cofactor biosynthesis; molybdopterin biosynthesis. In terms of biological role, catalyzes the cyclization of GTP to (8S)-3',8-cyclo-7,8-dihydroguanosine 5'-triphosphate. The chain is GTP 3',8-cyclase from Actinobacillus succinogenes (strain ATCC 55618 / DSM 22257 / CCUG 43843 / 130Z).